Here is a 451-residue protein sequence, read N- to C-terminus: Multidrug export protein MepA (451 aa).

12 helical membrane passes run 26–46 (MIGT…IGFL), 54–74 (AISL…LFGV), 97–117 (SFSI…ALPF), 139–159 (LKVM…EQFA), 170–190 (IGML…IFGF), 194–214 (VVGA…FFII), 245–265 (IPAF…NLFL), 282–302 (LVQF…PLIA), 318–338 (AVIM…FTIG), 355–375 (ATFI…GFLF), 397–417 (VVII…GVIW), and 418–438 (SLLI…YLLR).

It belongs to the multi antimicrobial extrusion (MATE) (TC 2.A.66.1) family. MepA subfamily.

The protein resides in the cell membrane. In terms of biological role, multidrug resistance efflux protein. The polypeptide is Multidrug export protein MepA (mepA) (Staphylococcus aureus (strain MRSA252)).